The following is a 220-amino-acid chain: Vesicle-associated membrane protein 7 (220 aa).

Ala2 is subject to N-acetylalanine. The Cytoplasmic segment spans residues 2–188 (AILFAVVARG…ARAMCVKNVK (187 aa)). Residues 7–110 (VVARGTTILA…AMNSEFSSVL (104 aa)) enclose the Longin domain. In terms of domain architecture, v-SNARE coiled-coil homology spans 125-185 (RVTETQAQVD…RNLARAMCVK (61 aa)). 2 positions are modified to phosphoserine: Ser167 and Ser168. The helical; Anchor for type IV membrane protein transmembrane segment at 189–209 (LTAIIVVVSIVFIYIIVSPLC) threads the bilayer. At 210–220 (GGFTWPSCVKK) the chain is on the vesicular side.

This sequence belongs to the synaptobrevin family. In terms of assembly, may interact with STX17. Component of the SNARE complex composed of STX4, SNAP23 and VAMP7 that binds SYT7 during lysosomal exocytosis. Component of the SNARE complex composed of STX7, STX8, VAMP7 and VTI1B that is required for heterotypic fusion of late endosomes with lysosomes. Interacts with PICALM. Interacts with RAB21. As to expression, expressed in brain, kidney, liver, lung, spleen and thymus. Not expressed in heart and skeletal muscle.

It is found in the cytoplasmic vesicle. It localises to the secretory vesicle membrane. The protein resides in the golgi apparatus. Its subcellular location is the trans-Golgi network membrane. The protein localises to the late endosome membrane. It is found in the lysosome membrane. It localises to the endoplasmic reticulum membrane. The protein resides in the phagosome membrane. Its subcellular location is the synapse. The protein localises to the synaptosome. Involved in the targeting and/or fusion of transport vesicles to their target membrane during transport of proteins from the early endosome to the lysosome. Required for heterotypic fusion of late endosomes with lysosomes and homotypic lysosomal fusion. Required for calcium regulated lysosomal exocytosis. Involved in the export of chylomicrons from the endoplasmic reticulum to the cis Golgi. Required for exocytosis of mediators during eosinophil and neutrophil degranulation, and target cell killing by natural killer cells. Required for focal exocytosis of late endocytic vesicles during phagosome formation. In Rattus norvegicus (Rat), this protein is Vesicle-associated membrane protein 7 (Vamp7).